Consider the following 71-residue polypeptide: MMRRILLKSIKFYRIYLSPLKRNACCKFIPTCSQYAIDAIEKYGALKGSFMAVKRILRCNPFSKGGYDPVK.

Belongs to the UPF0161 family.

The protein resides in the cell membrane. Its function is as follows. Could be involved in insertion of integral membrane proteins into the membrane. This chain is Putative membrane protein insertion efficiency factor, found in Clostridium acetobutylicum (strain ATCC 824 / DSM 792 / JCM 1419 / IAM 19013 / LMG 5710 / NBRC 13948 / NRRL B-527 / VKM B-1787 / 2291 / W).